Here is a 310-residue protein sequence, read N- to C-terminus: Olfactory receptor 7A42 (310 aa).

Residues 1 to 25 (MESGNSTRRIPSFFLLGFSENPHLQ) lie on the Extracellular side of the membrane. N-linked (GlcNAc...) asparagine glycosylation occurs at Asn-5. The helical transmembrane segment at 26–46 (FLIFVLFLSMYLVTVLGNLLI) threads the bilayer. Residues 47–67 (IMVIITQSPLHTPMYFFLANL) are Cytoplasmic-facing. The chain crosses the membrane as a helical span at residues 68–88 (SFVDICFTSTTVPKMLVNIQT). At 89–100 (QSKAITYADCIS) the chain is on the extracellular side. The cysteines at positions 98 and 190 are disulfide-linked. Residues 101–121 (QMSVFLVFAELDNFLLAVMAY) form a helical membrane-spanning segment. At 122–135 (DRYVAICHPLYYTF) the chain is on the cytoplasmic side. Residues 136–156 (IVNQHLCILMVLLSWVVSILH) form a helical membrane-spanning segment. Residues 157–202 (AFLQSSIVLQLTFCGDVKIPHFFCELNQLSQLTCLDSLSSHLIMNL) lie on the Extracellular side of the membrane. The helical transmembrane segment at 203–223 (VPVLLAVISFSSILYSYFKIV) threads the bilayer. Over 224 to 240 (SSICSISSVQGKYTAFS) the chain is Cytoplasmic. The helical transmembrane segment at 241-261 (TCVSHLSIVFLFYSTGLGVYV) threads the bilayer. The Extracellular portion of the chain corresponds to 262–272 (SSAVVQSSHSA). The chain crosses the membrane as a helical span at residues 273 to 293 (ARASVMYTVVTPMLNPFIYSL). The Cytoplasmic portion of the chain corresponds to 294–310 (RNKDVKKALERLLEGKL).

This sequence belongs to the G-protein coupled receptor 1 family.

Its subcellular location is the cell membrane. Functionally, odorant receptor. The sequence is that of Olfactory receptor 7A42 from Mus musculus (Mouse).